Reading from the N-terminus, the 267-residue chain is DNA repair protein RecO (267 aa).

It belongs to the RecO family.

Involved in DNA repair and RecF pathway recombination. The protein is DNA repair protein RecO of Moorella thermoacetica (strain ATCC 39073 / JCM 9320).